A 539-amino-acid polypeptide reads, in one-letter code: DnaJ homolog subfamily C member 7 homolog (539 aa).

6 TPR repeats span residues 3 to 36 (HEECKTQGNNYFKQSQYMDAIRCYTQAIELSNGT), 75 to 108 (IKGYTRASKAYIHLAQYDQAASIIVRGLVFDPRN), 189 to 222 (PEYLYVRGLSLYYQNNFPLALQHFQNSLTYDPDY), 235 to 268 (IESKKKEGNEYFQSKNYQAAYDSFTEALSIDPKL), 273 to 306 (SQLYSNRAAALVHLNRISEAINDCTSAVTIDPNY), and 307 to 340 (GKAYIRRAQCQMKQENYEDAVRDYEKAQSLDPEN). In terms of domain architecture, J spans 361 to 431 (DYYKILGVSK…KKKRQYDMGQ (71 aa)). The segment at 512–539 (MGGGFGGHSGHSHGGSRSRSSRGGNEYR) is disordered. Positions 521–531 (GHSHGGSRSRS) are enriched in basic residues.

This is DnaJ homolog subfamily C member 7 homolog (dnajc7) from Dictyostelium discoideum (Social amoeba).